Consider the following 424-residue polypeptide: Endochitinase 1 (424 aa).

Positions 1 to 22 are cleaved as a signal peptide; it reads MPSLFAQSLAIIATLQATLGLA. The GH18 domain maps to 39–402; sequence YVNAVYFTNW…GTSSNKLGGP (364 aa). Residues asparagine 74, asparagine 78, and asparagine 96 are each glycosylated (N-linked (GlcNAc...) asparagine). Chitin-binding positions include 103-104 and 130-133; these read GN and GGWT. The active-site Proton donor is the glutamate 172. Residues tyrosine 173 and 238-241 contribute to the chitin site; that span reads MAYD. 2 N-linked (GlcNAc...) asparagine glycosylation sites follow: asparagine 248 and asparagine 347. Residue tryptophan 379 coordinates chitin. Residues 385–412 form a disordered region; sequence RQGPDSLIGTSSNKLGGPDTTENLLNYP. The span at 392-408 shows a compositional bias: polar residues; the sequence is IGTSSNKLGGPDTTENL.

Belongs to the glycosyl hydrolase 18 family. Chitinase class V subfamily.

It localises to the secreted. It carries out the reaction Random endo-hydrolysis of N-acetyl-beta-D-glucosaminide (1-&gt;4)-beta-linkages in chitin and chitodextrins.. Secreted chitinase involved in the degradation of chitin, a component of the cell walls of fungi and exoskeletal elements of some animals (including worms and arthropods). Participates in the infection process and directly acts in the penetration process of the host cuticle. The protein is Endochitinase 1 (chit1) of Metarhizium robertsii (strain ARSEF 23 / ATCC MYA-3075) (Metarhizium anisopliae (strain ARSEF 23)).